We begin with the raw amino-acid sequence, 361 residues long: Large-conductance mechanosensitive channel MscMJLR (361 aa).

5 consecutive transmembrane segments (helical) span residues 20 to 40, 65 to 85, 89 to 109, 137 to 157, and 177 to 197; these read ILSL…NALI, LPVA…FLYL, LKTA…VVFF, IVVL…LLLI, and LAVA…LIIL.

It belongs to the MscS (TC 1.A.23) family.

The protein localises to the cell membrane. Its function is as follows. Large-conductance mechanosensitive channel that opens in response to stretch forces in the membrane lipid bilayer. Selective for cations. Rectifies with voltage. The polypeptide is Large-conductance mechanosensitive channel MscMJLR (Methanocaldococcus jannaschii (strain ATCC 43067 / DSM 2661 / JAL-1 / JCM 10045 / NBRC 100440) (Methanococcus jannaschii)).